We begin with the raw amino-acid sequence, 169 residues long: MQLKDYVKDVLDFPKKGIVFKDISPLLADKDAFDLIIKEMAKYCQNSDYIVAADARGFIFGAAIAFHLKKPFVMVRKPKKMPGPSYSVSYELEYGHNVLELQEDLIKENASVSIVDDILATGGTLNAMIELLEKAKAKVNNIVVAIDLTKLSQDFKSSLKTPLDSVIKY.

This sequence belongs to the purine/pyrimidine phosphoribosyltransferase family. Homodimer.

The protein localises to the cytoplasm. The enzyme catalyses AMP + diphosphate = 5-phospho-alpha-D-ribose 1-diphosphate + adenine. The protein operates within purine metabolism; AMP biosynthesis via salvage pathway; AMP from adenine: step 1/1. Its function is as follows. Catalyzes a salvage reaction resulting in the formation of AMP, that is energically less costly than de novo synthesis. This is Adenine phosphoribosyltransferase from Mycoplasmopsis synoviae (strain 53) (Mycoplasma synoviae).